The chain runs to 271 residues: MVVKKPRPKKKPVTKKVAPAPLAVKKPVVKKVVNQLFEKRPKNFGIGQNVQPKRDLSRFVRWPKYIRVQRQKAVLQKRLKVPPPIHQFSQTLDKTTAVKLFKLLEKYRPESPLAKKLRLKKIAEAKAKGKDVEPKKKPSYVSAGTNTVTKLIEQKKAQLVVIAHDVDPLELVLFLPALCRKMGVPYCIVKGKARLGRLVRRKTCTTLALTTVDNNDKANFGKVLEAVKTNFNERHEEIRRHWGGGILGSKSLARISKLERAKARELAQKQG.

Belongs to the eukaryotic ribosomal protein eL8 family.

The protein is Large ribosomal subunit protein eL8 (RpL7A) of Drosophila melanogaster (Fruit fly).